Consider the following 312-residue polypeptide: MKHLLSIADLSRDEIISLLDEADRFKEVLEGREVKKLPTLRGRTIFTLFYENSTRTRSSFETAGKWMSADVINISASSSSVKKGESLKDTGLTLSAIGADAIIMRHPSSGAAQQLAGYVAPGGVGPSVINAGDGSHQHPTQALLDALTLRQRLGGIEGRKIVIVGDILHSRVVRSNVDLLSTLGAEVILVAPPTLLPYGVENWPVRTSYDMDAEIRDADAVMMLRVQQERMQGGFFPSHREYATLYGMSKAREASLKDSAIIMHPGPMLRGMEINFGVADAPRTAVLQQVSNGVHVRMAVLFALVAGSDATI.

2 residues coordinate carbamoyl phosphate: Arg55 and Thr56. Position 83 (Lys83) interacts with L-aspartate. Carbamoyl phosphate is bound by residues Arg105, His138, and Gln141. L-aspartate-binding residues include Arg171 and Arg225. Residues Gly266 and Pro267 each contribute to the carbamoyl phosphate site.

This sequence belongs to the aspartate/ornithine carbamoyltransferase superfamily. ATCase family. Heterododecamer (2C3:3R2) of six catalytic PyrB chains organized as two trimers (C3), and six regulatory PyrI chains organized as three dimers (R2).

The enzyme catalyses carbamoyl phosphate + L-aspartate = N-carbamoyl-L-aspartate + phosphate + H(+). It participates in pyrimidine metabolism; UMP biosynthesis via de novo pathway; (S)-dihydroorotate from bicarbonate: step 2/3. In terms of biological role, catalyzes the condensation of carbamoyl phosphate and aspartate to form carbamoyl aspartate and inorganic phosphate, the committed step in the de novo pyrimidine nucleotide biosynthesis pathway. This is Aspartate carbamoyltransferase catalytic subunit from Corynebacterium efficiens (strain DSM 44549 / YS-314 / AJ 12310 / JCM 11189 / NBRC 100395).